We begin with the raw amino-acid sequence, 281 residues long: CCAAT/enhancer-binding protein epsilon (281 aa).

The interval Met-1 to Leu-30 is disordered. Lys-121 is covalently cross-linked (Glycyl lysine isopeptide (Lys-Gly) (interchain with G-Cter in SUMO2)). Ser-181 carries the post-translational modification Phosphoserine. Residues Ser-204–Ile-267 form the bZIP domain. Residues Arg-208–Arg-245 form a basic motif region. The tract at residues Leu-246–Ile-267 is leucine-zipper.

Belongs to the bZIP family. C/EBP subfamily. In terms of assembly, binds DNA as a homodimer and as a heterodimer. Can form stable heterodimers with CEBPA, CEBPB and CEBPD. Interacts with GATA1 and SPI1. Interacts with SMARCD2. Post-translationally, phosphorylated.

It localises to the nucleus. Transcriptional activator. C/EBP are DNA-binding proteins that recognize two different motifs: the CCAAT homology common to many promoters and the enhanced core homology common to many enhancers. Required for the promyelocyte-myelocyte transition in myeloid differentiation. This Mus musculus (Mouse) protein is CCAAT/enhancer-binding protein epsilon (Cebpe).